Reading from the N-terminus, the 143-residue chain is Acetyltransferase plu1384 (143 aa).

The N-acetyltransferase domain maps to 1-138 (MEIRVFRQDD…ESVIFSKRLI (138 aa)).

This sequence belongs to the acetyltransferase family. YpeA subfamily.

The sequence is that of Acetyltransferase plu1384 from Photorhabdus laumondii subsp. laumondii (strain DSM 15139 / CIP 105565 / TT01) (Photorhabdus luminescens subsp. laumondii).